Here is a 312-residue protein sequence, read N- to C-terminus: Olfactory receptor 1D2 (312 aa).

The Extracellular portion of the chain corresponds to 1–25; sequence MDGGNQSEGSEFLLLGMSESPEQQR. N5 carries N-linked (GlcNAc...) asparagine glycosylation. The helical transmembrane segment at 26–49 threads the bilayer; sequence ILFWMFLSMYLVTVVGNVLIILAI. At 50-57 the chain is on the cytoplasmic side; it reads SSDSRLHT. The chain crosses the membrane as a helical span at residues 58–79; the sequence is PVYFFLANLSFTDLFFVTNTIP. The Extracellular segment spans residues 80–100; sequence KMLVNLQSHNKAISYAGCLTQ. Residues C97 and C189 are joined by a disulfide bond. The chain crosses the membrane as a helical span at residues 101–120; the sequence is LYFLVSLVALDNLILAVMAY. Topologically, residues 121–139 are cytoplasmic; sequence DRYVAICCPLHYTTAMSPK. A helical transmembrane segment spans residues 140-158; that stretch reads LCILLLSLCWVLSVLYGLI. Over 159–196 the chain is Extracellular; that stretch reads HTLLMTRVTFCGSRKIHYIFCEMYVLLRMACSNIQINH. N195 carries an N-linked (GlcNAc...) asparagine glycan. The helical transmembrane segment at 197-219 threads the bilayer; the sequence is TVLIATGCFIFLIPFGFVIISYV. Over 220–236 the chain is Cytoplasmic; the sequence is LIIRAILRIPSVSKKYK. Residues 237-259 traverse the membrane as a helical segment; that stretch reads AFSTCASHLGAVSLFYGTLCMVY. At 260–271 the chain is on the extracellular side; that stretch reads LKPLHTYSVKDS. A helical membrane pass occupies residues 272–291; the sequence is VATVMYAVVTPMMNPFIYSL. Topologically, residues 292 to 312 are cytoplasmic; it reads RNKDMHGALGRLLDKHFKRLT.

Belongs to the G-protein coupled receptor 1 family. Expressed in testis. Expressed in spermatozoa (at protein level). Expressed in olfactory epithelium.

It localises to the cell membrane. In terms of biological role, odorant receptor which may be involved in sperm chemotaxis. Bourgeonal is a strong chemoattractant for sperm in vitro and is shown to be a strong agonist for OR1D2 in vitro. May also function in olfactory reception. The protein is Olfactory receptor 1D2 (OR1D2) of Homo sapiens (Human).